Here is a 213-residue protein sequence, read N- to C-terminus: MIITIFGPPGSGKGTQSSLLIAKYNLKLISVGDLLRNIISSSSELGKKIKGTVESGNLIQDEIICGLLRDQLALVDDNCLLDGFPRNLNQAHFLTQVLQEKYNRDVDIVVELQLDDNIAIDRLKNRLACLDCKNIYSVSSFKSTTCAKCKSTRLEKRIDDADMSAINKRISEYHLQMKGLREYYKGKLLTIDANLSVDEVTQEIESKISCNLV.

ATP is bound at residue 10–15; it reads GSGKGT. The tract at residues 30–59 is NMP; that stretch reads SVGDLLRNIISSSSELGKKIKGTVESGNLI. Residues Arg-36, 57-59, 83-86, and Gln-90 contribute to the AMP site; these read NLI and GFPR. An LID region spans residues 125–160; sequence NRLACLDCKNIYSVSSFKSTTCAKCKSTRLEKRIDD. Arg-126 serves as a coordination point for ATP. The Zn(2+) site is built by Cys-129 and Cys-132. 135–136 is a binding site for ATP; the sequence is IY. Zn(2+) contacts are provided by Cys-146 and Cys-149. Positions 157 and 169 each coordinate AMP. Leu-195 serves as a coordination point for ATP.

This sequence belongs to the adenylate kinase family. As to quaternary structure, monomer.

The protein resides in the cytoplasm. The enzyme catalyses AMP + ATP = 2 ADP. It functions in the pathway purine metabolism; AMP biosynthesis via salvage pathway; AMP from ADP: step 1/1. Catalyzes the reversible transfer of the terminal phosphate group between ATP and AMP. Plays an important role in cellular energy homeostasis and in adenine nucleotide metabolism. The protein is Adenylate kinase of Wolbachia pipientis wMel.